The primary structure comprises 287 residues: Probable WRKY transcription factor 57 (287 aa).

Residues 86-99 are compositionally biased toward low complexity; it reads TSTNNNPSATSSSS. The interval 86–137 is disordered; it reads TSTNNNPSATSSSSEDPAENSTASAEKTPPPETPVKEKKKAQKRIRQPRFAF. Basic residues predominate over residues 122 to 132; the sequence is EKKKAQKRIRQ. The segment at residues 141–206 is a DNA-binding region (WRKY); the sequence is SDVDNLEDGY…YEGQHCHQTI (66 aa). The disordered stretch occupies residues 248–287; sequence DNNAPSPRLPRPTTEDTPAVSTPSEEGLLGDIVPQTMRNP. Residues 262–271 are compositionally biased toward polar residues; that stretch reads EDTPAVSTPS.

Belongs to the WRKY group II-c family.

The protein localises to the nucleus. Transcription factor. Interacts specifically with the W box (5'-(T)TGAC[CT]-3'), a frequently occurring elicitor-responsive cis-acting element. The polypeptide is Probable WRKY transcription factor 57 (WRKY57) (Arabidopsis thaliana (Mouse-ear cress)).